Reading from the N-terminus, the 152-residue chain is Lipoprotein signal peptidase (152 aa).

Transmembrane regions (helical) follow at residues 55–75 and 85–105; these read NKMWFFYIITVVFVVFIVFYM and LGISLGLILGGAIGNFIDRVF. Active-site residues include Asp-111 and Asp-129. A helical transmembrane segment spans residues 124-144; that stretch reads VFNIADSALCIGVVLIIIQTL.

This sequence belongs to the peptidase A8 family.

It is found in the cell membrane. It carries out the reaction Release of signal peptides from bacterial membrane prolipoproteins. Hydrolyzes -Xaa-Yaa-Zaa-|-(S,diacylglyceryl)Cys-, in which Xaa is hydrophobic (preferably Leu), and Yaa (Ala or Ser) and Zaa (Gly or Ala) have small, neutral side chains.. Its pathway is protein modification; lipoprotein biosynthesis (signal peptide cleavage). Its function is as follows. This protein specifically catalyzes the removal of signal peptides from prolipoproteins. The protein is Lipoprotein signal peptidase of Bacillus cereus (strain G9842).